We begin with the raw amino-acid sequence, 506 residues long: 5'-3' exonuclease PLD4 (506 aa).

A helical membrane pass occupies residues 31–51; sequence LQVLGALAVLWLGSVALICLL. Cysteines 94 and 250 form a disulfide. N150 and N171 each carry an N-linked (GlcNAc...) asparagine glycan. The PLD phosphodiesterase 1 domain occupies 209 to 236; sequence TRGVLHSKFWVVDGRHIYMGSANMDWRS. H214 serves as the catalytic Proton donor. Active-site residues include K216 and D221. Residues N249, N281, N403, N417, and N427 are each glycosylated (N-linked (GlcNAc...) asparagine). A disulfide bridge connects residues C379 and C502. Residues 423 to 449 enclose the PLD phosphodiesterase 2 domain; it reads FSRVNHSKFMVTEKAAYIGTSNWSEDY. The active-site Nucleophile is the H428. N444 carries N-linked (GlcNAc...) asparagine glycosylation.

This sequence belongs to the phospholipase D family. Homodimer. Highly N-glycosylated. Expressed in plasmacytoid dendritic cells and monocytes (at protein level).

It is found in the endoplasmic reticulum membrane. It localises to the golgi apparatus. The protein localises to the trans-Golgi network membrane. Its subcellular location is the nucleus. The protein resides in the early endosome. It is found in the cytoplasmic vesicle. It localises to the phagosome. The protein localises to the lysosome. It carries out the reaction Exonucleolytic cleavage in the 5'- to 3'-direction to yield nucleoside 3'-phosphates.. The catalysed reaction is a 5'-end 5'-dephospho-ribonucleotidyl-ribonucleotide-RNA + H2O = a ribonucleoside 3'-phosphate + a 5'-end dephospho-ribonucleoside-RNA + H(+). The enzyme catalyses a ribonucleoside 3'-phosphate-2'-3'-cyclophospho-GMP + H2O = a ribonucleoside 3'-phosphate + 2',3'-cyclophospho-GMP + H(+). It catalyses the reaction a 5'-end 5'-dephospho-2'-deoxyribonucleotidyl-2'-deoxyribonucleotide in single-stranded DNA + H2O = a 5'-end dephospho-2'-deoxyribonucleoside in single-stranded DNA + a 2'-deoxyribonucleoside 3'-phosphate + H(+). It carries out the reaction a 5'-end 5'-phospho-2'-deoxyribonucleotide in single-stranded DNA + H2O = a 5'-end 5'-dephospho-2'-deoxyribonucleotide in single-stranded DNA + phosphate. The catalysed reaction is a 3-lyso-sn-glycero-1-phospho-(3'-acyl-1'-sn-glycerol) + a 1-acyl-sn-glycerol = a 3-acyl-sn-glycero-1-phospho-(3'-acyl-1'-sn-glycerol) + glycerol. The enzyme catalyses 3-lyso-sn-glycero-1-phospho-(3'-(9Z-octadecenoyl)-1'-sn-glycerol) + 1-(9Z-octadecenoyl)-sn-glycerol = 3-(9Z-octadecenoyl)-sn-glycero-1-phospho-(3'-(9Z-octadecenoyl)-1'-sn-glycerol) + glycerol. Its activity is regulated as follows. The exonuclease activity toward ssDNA substrate is Ca(2+) and Mg(2+)-independent, but it is inhibited by Fe(2+), Cu(2+) and to a lesser extent Zn(2+) ions. Its function is as follows. 5'-&gt;3' exonuclease that hydrolyzes the phosphodiester bond of single-stranded DNA (ssDNA) and RNA molecules to form nucleoside 3'-monophosphates and 5'-end 5'-hydroxy deoxyribonucleotide/ribonucleotide fragments. Partially redundant with PLD3, can cleave all four nucleotides displaying higher efficiency for ssDNA and RNA fragments initiated with uridine and guanosine residues and lower efficiency for cytidine-initiated substrates. As a result, it does not always degrade polynucleotides to the single nucleotide level, it can stall at specific sites sparing certain fragments from exonucleolytic degradation. Processes self and pathogenic ssDNA and RNA molecules that reach the endolysosomal compartment via phagocytosis or autophagy and may serve as 'danger' signals for recognition by innate immune receptors such as toll-like receptors (TLRs). Degrades mitochondrial CpG-rich ssDNA fragments to prevent TLR9 activation and autoinflammatory response, but it can cleave viral RNA to generate ligands for TLR7 activation and initiate antiviral immune responses. In plasmacytoid dendritic cells, it cooperates with endonuclease RNASET2 to release 2',3'-cyclic guanosine monophosphate (2',3'-cGMP), a potent stimulatory ligand for TLR7. Produces 2',3'-cGMPs and cytidine-rich RNA fragments that occupy TLR7 ligand-binding pockets and trigger a signaling-competent state. Can exert polynucleotide phosphatase activity toward 5'-phosphorylated ssDNA substrates although at a slow rate. Transphosphatidylase that catalyzes the exchange with R to S stereo-inversion of the glycerol moiety between (S,R)-lysophosphatidylglycerol (LPG) and monoacylglycerol (MAG) substrates to yield (S,S)-bis(monoacylglycero)phosphate (BMP). Can synthesize a variety of (S,S)-BMPs representing the main phospholipid constituent of lysosomal intralumenal vesicle (ILV) membranes that bind acid hydrolases for lipid degradation. Regulates the homeostasis and interorganellar communication of the endolysosomal system with an overall impact on cellular removal of dysfunctional organelles via autophagy as well as proper protein and lipid turnover. May play a role in myotube formation in response to ER stress. This Homo sapiens (Human) protein is 5'-3' exonuclease PLD4.